Consider the following 138-residue polypeptide: MKSFVLATCLLGFAQIIYADTEKLKILRKDIAKCARTLPKCVNQPDDPLARVDVWHCALAKSGVFDDPDPAAIKKKYKKFCAIAVTDPANVENCKKVTSRCVDKETQCSKSNRQKAINIAACILRSGVTETTVLAREK.

Positions Met1–Ala19 are cleaved as a signal peptide.

It belongs to the ant venom allergen 2/4 family. In terms of assembly, homodimer; disulfide-linked. Expressed by the venom gland.

The protein localises to the secreted. In Solenopsis saevissima (Fire ant), this protein is Venom allergen 2.